The sequence spans 150 residues: MRTVVQQVREASVSIGGELHSSIGTGLLVLAGISRDDTADDLAWMSRKIPNLRIFEDEKGKMNRSLKDIGGALLVVSQFTLYADASRGNRPGFSESAPPELARVLFDRFVESIRHEAGCPVETGVFGADMQVSLVNDGPVTIILESPKKP.

The short motif at 138 to 139 (GP) is the Gly-cisPro motif, important for rejection of L-amino acids element.

The protein belongs to the DTD family. As to quaternary structure, homodimer.

The protein resides in the cytoplasm. The catalysed reaction is glycyl-tRNA(Ala) + H2O = tRNA(Ala) + glycine + H(+). It catalyses the reaction a D-aminoacyl-tRNA + H2O = a tRNA + a D-alpha-amino acid + H(+). Its function is as follows. An aminoacyl-tRNA editing enzyme that deacylates mischarged D-aminoacyl-tRNAs. Also deacylates mischarged glycyl-tRNA(Ala), protecting cells against glycine mischarging by AlaRS. Acts via tRNA-based rather than protein-based catalysis; rejects L-amino acids rather than detecting D-amino acids in the active site. By recycling D-aminoacyl-tRNA to D-amino acids and free tRNA molecules, this enzyme counteracts the toxicity associated with the formation of D-aminoacyl-tRNA entities in vivo and helps enforce protein L-homochirality. The polypeptide is D-aminoacyl-tRNA deacylase (Chlorobaculum tepidum (strain ATCC 49652 / DSM 12025 / NBRC 103806 / TLS) (Chlorobium tepidum)).